Here is a 925-residue protein sequence, read N- to C-terminus: Neuropilin-2 (925 aa).

An N-terminal signal peptide occupies residues 1 to 22; it reads MDMFPLTWIFLALYFSGHKVRS. At 23–858 the chain is on the extracellular side; sequence QQDPPCGGRL…EKSWLYTLDP (836 aa). 3 disulfides stabilise this stretch: Cys-28–Cys-55, Cys-83–Cys-105, and Cys-149–Cys-175. 2 CUB domains span residues 28–142 and 149–267; these read CGGR…YEIF and CSKN…YYLV. 2 N-linked (GlcNAc...) asparagine glycosylation sites follow: Asn-152 and Asn-157. Ca(2+) contacts are provided by Glu-197, Asp-211, and Asp-252. Cys-208 and Cys-230 are oxidised to a cystine. Intrachain disulfides connect Cys-277-Cys-427 and Cys-434-Cys-592. F5/8 type C domains follow at residues 277 to 427 and 434 to 592; these read CNAP…LFGC and CSNM…VLGC. A compositionally biased stretch (polar residues) spans 297–310; that stretch reads STFSDGRWTPQQSR. The segment at 297 to 317 is disordered; sequence STFSDGRWTPQQSRLHGDDNG. Positions 601–621 are disordered; that stretch reads VETLGPTVKSEETTTPYPMDE. Asn-629 carries an N-linked (GlcNAc...) asparagine glycan. Residues 642 to 802 form the MAM domain; it reads SGFNCNFDFP…TDVPLENCME (161 aa). The span at 820–830 shows a compositional bias: acidic residues; that stretch reads YEDEIDDDYEG. The segment at 820–849 is disordered; sequence YEDEIDDDYEGDWNNSSSTSGAGSPSSGKE. 2 N-linked (GlcNAc...) asparagine glycosylation sites follow: Asn-833 and Asn-834. Low complexity predominate over residues 835-846; the sequence is SSSTSGAGSPSS. Residues 859 to 883 traverse the membrane as a helical segment; sequence ILITIIAMSSLGVLLGATCAGLLLY. At 884–925 the chain is on the cytoplasmic side; sequence CTCSYSGLSSRSCTTLENYNFELYDGLKHKVKINHQKCCSEA.

It belongs to the neuropilin family. In terms of assembly, heterodimer with NRP1. Binds PLXNB1. As to expression, found in certain neuronal populations of the CNS, including dorsal root ganglia, and in other non-neuronal tissues including mesenchymal tissue lining in the ribs.

Its subcellular location is the membrane. In terms of biological role, high affinity receptor for semaphorins 3C, 3F, VEGF-165 and VEGF-145 isoforms of VEGF, and the PLGF-2 isoform of PGF. The protein is Neuropilin-2 (Nrp2) of Rattus norvegicus (Rat).